A 119-amino-acid chain; its full sequence is UPF0145 protein Bcep18194_B0595 (119 aa).

The protein belongs to the UPF0145 family.

This Burkholderia lata (strain ATCC 17760 / DSM 23089 / LMG 22485 / NCIMB 9086 / R18194 / 383) protein is UPF0145 protein Bcep18194_B0595.